The sequence spans 363 residues: Fructose-bisphosphate aldolase C (363 aa).

Positions 56 and 147 each coordinate substrate. Catalysis depends on Lys-230, which acts as the Schiff-base intermediate with dihydroxyacetone-P.

This sequence belongs to the class I fructose-bisphosphate aldolase family. As to quaternary structure, homotetramer. As to expression, expressed in brain but not in liver or muscle.

It catalyses the reaction beta-D-fructose 1,6-bisphosphate = D-glyceraldehyde 3-phosphate + dihydroxyacetone phosphate. It participates in carbohydrate degradation; glycolysis; D-glyceraldehyde 3-phosphate and glycerone phosphate from D-glucose: step 4/4. The protein is Fructose-bisphosphate aldolase C (aldoc) of Carassius auratus (Goldfish).